A 209-amino-acid polypeptide reads, in one-letter code: Ribosomal RNA large subunit methyltransferase E (209 aa).

The S-adenosyl-L-methionine site is built by glycine 63, tryptophan 65, aspartate 83, aspartate 99, and aspartate 124. Lysine 164 functions as the Proton acceptor in the catalytic mechanism.

Belongs to the class I-like SAM-binding methyltransferase superfamily. RNA methyltransferase RlmE family.

It localises to the cytoplasm. It carries out the reaction uridine(2552) in 23S rRNA + S-adenosyl-L-methionine = 2'-O-methyluridine(2552) in 23S rRNA + S-adenosyl-L-homocysteine + H(+). Its function is as follows. Specifically methylates the uridine in position 2552 of 23S rRNA at the 2'-O position of the ribose in the fully assembled 50S ribosomal subunit. This is Ribosomal RNA large subunit methyltransferase E from Aliivibrio fischeri (strain ATCC 700601 / ES114) (Vibrio fischeri).